The following is a 428-amino-acid chain: uncharacterized protein (428 aa).

Residues 1 to 49 (MRTQTFPPSSSSSRTTHPKKNRHSSNSSSMALVTPAKSSTGAAPKQSSQ) form a disordered region. A compositionally biased stretch (polar residues) spans 24–49 (SSNSSSMALVTPAKSSTGAAPKQSSQ).

This is an uncharacterized protein from Caenorhabditis elegans.